The sequence spans 268 residues: tRNA pseudouridine synthase A (268 aa).

Catalysis depends on D52, which acts as the Nucleophile. Y110 contributes to the substrate binding site.

Belongs to the tRNA pseudouridine synthase TruA family. In terms of assembly, homodimer.

The catalysed reaction is uridine(38/39/40) in tRNA = pseudouridine(38/39/40) in tRNA. In terms of biological role, formation of pseudouridine at positions 38, 39 and 40 in the anticodon stem and loop of transfer RNAs. This is tRNA pseudouridine synthase A from Prochlorococcus marinus (strain MIT 9515).